Reading from the N-terminus, the 503-residue chain is Maturase K (503 aa).

This sequence belongs to the intron maturase 2 family. MatK subfamily.

It is found in the plastid. The protein localises to the chloroplast. Functionally, usually encoded in the trnK tRNA gene intron. Probably assists in splicing its own and other chloroplast group II introns. The protein is Maturase K of Panax ginseng (Korean ginseng).